The sequence spans 484 residues: Schwannomin-interacting protein 1 (484 aa).

The span at 1-28 shows a compositional bias: basic and acidic residues; that stretch reads MERSEQRVRAAWDCDPGKQADRDYREDG. Disordered stretches follow at residues 1–74, 86–220, 232–258, and 305–350; these read MERS…VSAL, KKVI…PPMD, QFRE…ERES, and SGSD…ESLD. Low complexity predominate over residues 33–67; it reads SDAGSSSSSRASSQSNSTKVTPCSECKSSSSPGGS. Positions 92 to 106 are enriched in acidic residues; the sequence is WAPEEDGEEEEEEDD. Residues 107–120 show a composition bias toward basic and acidic residues; the sequence is RGYRDDGCPAREPG. The span at 123–137 shows a compositional bias: low complexity; the sequence is SARIGSSGSGSRSAA. Over residues 150–159 the composition is skewed to basic and acidic residues; the sequence is HPHDPQDLRH. Positions 239 to 252 are enriched in polar residues; that stretch reads RNQGQARTNSTSAQ. Residues 306–320 are compositionally biased toward basic and acidic residues; that stretch reads GSDKDSDADDSKTET. Polar residues predominate over residues 321 to 332; sequence SLDTPLSPMSKQ. The span at 341–350 shows a compositional bias: acidic residues; the sequence is TTEEESESLD. Residues 421–455 adopt a coiled-coil conformation; that stretch reads IGQLQVIVNDLHSQIESLNEELVQLLLIRDELHTE.

The protein belongs to the SCHIP1 family. As to quaternary structure, homooligomer (via coiled coil domain). Interacts with NF2; the interaction is direct. Interacts with ANK3.

This Mus musculus (Mouse) protein is Schwannomin-interacting protein 1.